We begin with the raw amino-acid sequence, 147 residues long: uncharacterized protein (147 aa).

The chain crosses the membrane as a helical span at residues 3–23 (APMIGMVVLVVVLGLAVLALS).

It to M.leprae ML1147.

The protein resides in the membrane. This is an uncharacterized protein from Mycobacterium tuberculosis (strain CDC 1551 / Oshkosh).